We begin with the raw amino-acid sequence, 175 residues long: MLQEQPVALSFRPNSFRRRSMETGVDRDDRGWTQLHIKAREGDLKAVKELLDQGADVNALACGPKSKGMTPLHLAAKGGHIEVMDLLLERGANMEARTSGACGWTPLHAAAKERKREAVKFLVGNGAFLPDDITDSRFNPPVQYCHGLEWAYEERKKLSEDTSLSCGDTSCSSAN.

3 ANK repeats span residues 30-59 (RGWTQLHIKAREGDLKAVKELLDQGADVNA), 67-96 (KGMTPLHLAAKGGHIEVMDLLLERGANMEA), and 102-131 (CGWTPLHAAAKERKREAVKFLVGNGAFLPD).

In terms of assembly, interacts with phytochrome A (PHYA), both in Pr and Pfr forms.

It is found in the cytoplasm. It localises to the nucleus. Its subcellular location is the mitochondrion. In Arabidopsis thaliana (Mouse-ear cress), this protein is Phytochrome-interacting ankyrin-repeat protein 1.